Consider the following 262-residue polypeptide: Thrombin-like enzyme calobin-1 (262 aa).

A signal peptide spans 1 to 18 (MVLISVLANLLILQLSYA). Residues 19–24 (QKSSEL) constitute a propeptide that is removed on maturation. The region spanning 25–253 (VIGGDECNIN…HLDWIQSIIA (229 aa)) is the Peptidase S1 domain. 6 disulfide bridges follow: Cys-31–Cys-165, Cys-52–Cys-68, Cys-100–Cys-260, Cys-144–Cys-214, Cys-176–Cys-193, and Cys-204–Cys-229. His-67 serves as the catalytic Charge relay system. Asn-105 carries an N-linked (GlcNAc...) asparagine glycan. Asp-112 (charge relay system) is an active-site residue. The active-site Charge relay system is Ser-208.

This sequence belongs to the peptidase S1 family. Snake venom subfamily. Monomer. In terms of processing, N-glycosylated. Expressed by the venom gland.

The protein localises to the secreted. With respect to regulation, strongly inhibited by PMSF, and moderately by benzamidine and soybean trypsin inhibitor. Its function is as follows. Thrombin-like snake venom serine protease. Has a coagulant activity. Acts on alpha-chains of fibrinogen (FGA) generating fibrinopeptide A. The sequence is that of Thrombin-like enzyme calobin-1 from Gloydius ussuriensis (Ussuri mamushi).